A 588-amino-acid chain; its full sequence is Calcium/calmodulin-dependent protein kinase kinase 2 (588 aa).

Residues 1–14 (MSSCVSSQPSSNRA) are compositionally biased toward polar residues. Disordered regions lie at residues 1 to 33 (MSSC…SQKP) and 78 to 100 (GQEV…RKLS). S2 carries the N-acetylserine modification. Phosphoserine is present on residues S100, S114, S129, S133, and S137. A compositionally biased stretch (low complexity) spans 128-139 (YSPVSSPQSSPR). The interval 128-149 (YSPVSSPQSSPRLPRRPTVESH) is disordered. One can recognise a Protein kinase domain in the interval 165–446 (YTLKDEIGKG…VPEIKLHPWV (282 aa)). ATP contacts are provided by residues 171–179 (IGKGSYGVV) and K194. Positions 204-226 (QAGFPRRPPPRGTRPAPGGCIQP) are RP domain. Residues 205–225 (AGFPRRPPPRGTRPAPGGCIQ) form a disordered region. D312 (proton acceptor) is an active-site residue. The tract at residues 472-477 (ENSVKH) is autoinhibitory domain. The tract at residues 475-500 (VKHIPSLATVILVKTMIRKRSFGNPF) is calmodulin-binding. 5 positions are modified to phosphoserine: P479, S495, S511, T522, and S572. A disordered region spans residues 497–588 (GNPFEGSRRE…LRPEEAMEPE (92 aa)). Residues 521–536 (PTRECESLSELKEARQ) are compositionally biased toward basic and acidic residues. Residues 579–588 (LRPEEAMEPE) show a composition bias toward basic and acidic residues.

Belongs to the protein kinase superfamily. Ser/Thr protein kinase family. Interacts with calmodulin. Autophosphorylated and phosphorylated by PKA. Each isoform may show a different pattern of phosphorylation. Ubiquitously expressed with higher levels in the brain. Intermediate levels are detected in spleen, prostate, thyroid and leukocytes. The lowest level is in lung.

The protein resides in the nucleus. Its subcellular location is the cytoplasm. The protein localises to the cell projection. It is found in the neuron projection. The enzyme catalyses L-seryl-[protein] + ATP = O-phospho-L-seryl-[protein] + ADP + H(+). It carries out the reaction L-threonyl-[protein] + ATP = O-phospho-L-threonyl-[protein] + ADP + H(+). Its activity is regulated as follows. Activated by Ca(2+)/calmodulin. Binding of calmodulin may relieve intrasteric autoinhibition. Autophosphorylation does not alter activity or regulation by Ca(2+)/calmodulin. In part, activity is independent on Ca(2+)/calmodulin. Its function is as follows. Calcium/calmodulin-dependent protein kinase belonging to a proposed calcium-triggered signaling cascade involved in a number of cellular processes. Isoform 1, isoform 2 and isoform 3 phosphorylate CAMK1 and CAMK4. Isoform 3 phosphorylates CAMK1D. Isoform 4, isoform 5 and isoform 6 lacking part of the calmodulin-binding domain are inactive. Efficiently phosphorylates 5'-AMP-activated protein kinase (AMPK) trimer, including that consisting of PRKAA1, PRKAB1 and PRKAG1. This phosphorylation is stimulated in response to Ca(2+) signals. Seems to be involved in hippocampal activation of CREB1. May play a role in neurite growth. Isoform 3 may promote neurite elongation, while isoform 1 may promoter neurite branching. This Homo sapiens (Human) protein is Calcium/calmodulin-dependent protein kinase kinase 2 (CAMKK2).